The primary structure comprises 307 residues: Taste receptor type 2 member 41 (307 aa).

Residues 1-7 (MQAALTA) are Extracellular-facing. The chain crosses the membrane as a helical span at residues 8 to 28 (FFMLLFSLLSLLGIAANGFIV). Residues 29–40 (LVLGREWLRYGR) lie on the Cytoplasmic side of the membrane. A helical membrane pass occupies residues 41–61 (LLPLDMILISLGASRFCLQLV). At 62–88 (GTVHNFYYSAQKVEYSGGLGRQFFHLH) the chain is on the extracellular side. A helical membrane pass occupies residues 89 to 109 (WHFLNSATFWFCSWLSVLFCV). Over 110-129 (KIANITHPTFLWLKWRFPAW) the chain is Cytoplasmic. The helical transmembrane segment at 130-150 (VPWLLLGSVLISFIITLLFFW) threads the bilayer. At 151–183 (VNYPAYQEFLIRKFSVNMTYKWNTRIETYYFPS) the chain is on the extracellular side. An N-linked (GlcNAc...) asparagine glycan is attached at Asn-167. Residues 184-204 (LKLVIWSIPFSVFLVSIMLLI) traverse the membrane as a helical segment. Over 205-234 (NSLRRHTQRMQHNGHSLQDPSTQAHTRALK) the chain is Cytoplasmic. Residues 235–255 (SLISFLILYALSFLSLIIDAT) traverse the membrane as a helical segment. At 256–264 (KFISMQNDF) the chain is on the extracellular side. A helical membrane pass occupies residues 265–285 (YWPWQIAVYLCISIHPFILIF). Residues 286-307 (SNLKLRSVFSQLLLLARGFWVA) lie on the Cytoplasmic side of the membrane.

It belongs to the G-protein coupled receptor T2R family.

It localises to the membrane. Functionally, receptor that may play a role in the perception of bitterness and is gustducin-linked. May play a role in sensing the chemical composition of the gastrointestinal content. The activity of this receptor may stimulate alpha gustducin, mediate PLC-beta-2 activation and lead to the gating of TRPM5. The chain is Taste receptor type 2 member 41 (TAS2R41) from Pan paniscus (Pygmy chimpanzee).